The primary structure comprises 396 residues: Elongation factor Tu (396 aa).

A tr-type G domain is found at 10 to 206; that stretch reads KPHVNVGTIG…ALDDYIPEPE (197 aa). A G1 region spans residues 19–26; sequence GHVDHGKT. 19 to 26 contributes to the GTP binding site; the sequence is GHVDHGKT. Thr-26 serves as a coordination point for Mg(2+). The interval 60–64 is G2; the sequence is GITIA. Residues 81–84 form a G3 region; that stretch reads DCPG. GTP is bound by residues 81-85 and 136-139; these read DCPGH and NKAD. The G4 stretch occupies residues 136 to 139; the sequence is NKAD. A G5 region spans residues 174-176; the sequence is SAL.

This sequence belongs to the TRAFAC class translation factor GTPase superfamily. Classic translation factor GTPase family. EF-Tu/EF-1A subfamily. Monomer.

It is found in the cytoplasm. It carries out the reaction GTP + H2O = GDP + phosphate + H(+). Its function is as follows. GTP hydrolase that promotes the GTP-dependent binding of aminoacyl-tRNA to the A-site of ribosomes during protein biosynthesis. This is Elongation factor Tu from Methylococcus capsulatus (strain ATCC 33009 / NCIMB 11132 / Bath).